The chain runs to 544 residues: 4-coumarate--CoA ligase 1 (544 aa).

6 residues coordinate ATP: serine 190, serine 191, glycine 192, threonine 193, threonine 194, and lysine 198. Tyrosine 240 is a binding site for (E)-4-coumaroyl-AMP. Lysine 261 serves as a coordination point for CoA. The segment at 263 to 332 (DIVPFLELIQ…AKFPNAKLGQ (70 aa)) is SBD1. (E)-4-coumaroyl-AMP contacts are provided by alanine 310, glutamine 332, glycine 333, threonine 337, and methionine 345. ATP is bound by residues glutamine 332, glycine 333, and threonine 337. The segment at 333–400 (GYGMTEAGPV…IRGDQIMKGY (68 aa)) is SBD2. Residues aspartate 421 and arginine 436 each coordinate ATP. Residues lysine 438 and lysine 442 each coordinate (E)-4-coumaroyl-AMP. CoA is bound by residues lysine 444 and glycine 445. ATP is bound at residue lysine 527.

It belongs to the ATP-dependent AMP-binding enzyme family. Mg(2+) serves as cofactor.

The enzyme catalyses (E)-4-coumarate + ATP + CoA = (E)-4-coumaroyl-CoA + AMP + diphosphate. The catalysed reaction is (E)-4-coumarate + ATP + H(+) = (E)-4-coumaroyl-AMP + diphosphate. It catalyses the reaction (E)-4-coumaroyl-AMP + CoA = (E)-4-coumaroyl-CoA + AMP + H(+). It participates in phytoalexin biosynthesis; 3,4',5-trihydroxystilbene biosynthesis; 3,4',5-trihydroxystilbene from trans-4-coumarate: step 1/2. Functionally, carboxylate--CoA ligase that may use 4-coumarate as substrate. Follows a two-step reaction mechanism, wherein the carboxylate substrate first undergoes adenylation by ATP, followed by a thioesterification in the presence of CoA to yield the final CoA thioester. The protein is 4-coumarate--CoA ligase 1 (4CL1) of Petroselinum crispum (Parsley).